The primary structure comprises 294 residues: Nucleotide-binding protein A2cp1_0165 (294 aa).

An ATP-binding site is contributed by 17–24 (GVSGSGKS). Residue 68–71 (DARE) participates in GTP binding.

It belongs to the RapZ-like family.

Its function is as follows. Displays ATPase and GTPase activities. The sequence is that of Nucleotide-binding protein A2cp1_0165 from Anaeromyxobacter dehalogenans (strain 2CP-1 / ATCC BAA-258).